Consider the following 348-residue polypeptide: L-seryl-tRNA(Sec) kinase (348 aa).

Gly-25 to Ser-32 contributes to the ATP binding site.

It belongs to the L-seryl-tRNA(Sec) kinase family. It depends on Mg(2+) as a cofactor.

It carries out the reaction L-seryl-tRNA(Sec) + ATP = O-phospho-L-seryl-tRNA(Sec) + ADP. The protein operates within aminoacyl-tRNA biosynthesis; selenocysteinyl-tRNA(Sec) biosynthesis; selenocysteinyl-tRNA(Sec) from L-seryl-tRNA(Sec) (archaeal/eukaryal route): step 1/2. Specifically phosphorylates seryl-tRNA(Sec) to O-phosphoseryl-tRNA(Sec), an activated intermediate for selenocysteine biosynthesis. The protein is L-seryl-tRNA(Sec) kinase (PSTK) of Homo sapiens (Human).